Reading from the N-terminus, the 651-residue chain is LEAF RUST 10 DISEASE-RESISTANCE LOCUS RECEPTOR-LIKE PROTEIN KINASE-like 1.2 (651 aa).

Residues 1-26 (MNPSTPSLLYTSIFFYFTIIATQTLS) form the signal peptide. Topologically, residues 27-264 (LDPKFKACEP…NDKRRRVIVK (238 aa)) are extracellular. Asparagine 88, asparagine 114, asparagine 130, asparagine 136, asparagine 155, asparagine 193, and asparagine 213 each carry an N-linked (GlcNAc...) asparagine glycan. Residues 265 to 285 (VLIGASAAVVGLIAASIFWYV) form a helical membrane-spanning segment. At 286 to 651 (YHRRKTKSYR…DSVIVKWDSK (366 aa)) the chain is on the cytoplasmic side. Residues 341–613 (FDPSKELGDG…PCMSHVQDTL (273 aa)) form the Protein kinase domain. ATP-binding positions include 347–355 (LGDGGFGTV) and lysine 369. Tyrosine 415 is subject to Phosphotyrosine. Aspartate 465 (proton acceptor) is an active-site residue. Serine 498 bears the Phosphoserine mark. A phosphothreonine mark is found at threonine 499 and threonine 504. Phosphotyrosine is present on tyrosine 512.

The protein belongs to the protein kinase superfamily. Ser/Thr protein kinase family.

The protein resides in the cell membrane. The protein localises to the membrane. It catalyses the reaction L-seryl-[protein] + ATP = O-phospho-L-seryl-[protein] + ADP + H(+). The enzyme catalyses L-threonyl-[protein] + ATP = O-phospho-L-threonyl-[protein] + ADP + H(+). Probable receptor-like serine/threonine-protein kinase involved in abscisic acid (ABA) signaling. Acts as a positive regulator of abiotic stress response. The protein is LEAF RUST 10 DISEASE-RESISTANCE LOCUS RECEPTOR-LIKE PROTEIN KINASE-like 1.2 of Arabidopsis thaliana (Mouse-ear cress).